The sequence spans 402 residues: D-mannonate dehydratase (402 aa).

Substrate is bound by residues N37 and H122. Catalysis depends on Y159, which acts as the Proton donor/acceptor. A Mg(2+)-binding site is contributed by D210. Residue H212 is the Proton donor/acceptor of the active site. Positions 236 and 262 each coordinate Mg(2+). 5 residues coordinate substrate: E262, R283, H312, D316, and E339.

This sequence belongs to the mandelate racemase/muconate lactonizing enzyme family. GalD subfamily. It depends on Mg(2+) as a cofactor.

It carries out the reaction D-mannonate = 2-dehydro-3-deoxy-D-gluconate + H2O. It functions in the pathway carbohydrate metabolism; pentose and glucuronate interconversion. In terms of biological role, catalyzes the dehydration of D-mannonate. Has no detectable activity with a panel of 70 other acid sugars (in vitro). The protein is D-mannonate dehydratase of Rhizorhabdus wittichii (strain DSM 6014 / CCUG 31198 / JCM 15750 / NBRC 105917 / EY 4224 / RW1) (Sphingomonas wittichii).